Consider the following 273-residue polypeptide: HMP-PP phosphatase (273 aa).

The active-site Nucleophile is the aspartate 8. Positions 8, 10, and 212 each coordinate Mg(2+).

The protein belongs to the HAD-like hydrolase superfamily. Cof family. It depends on Mg(2+) as a cofactor.

The enzyme catalyses 4-amino-2-methyl-5-(diphosphooxymethyl)pyrimidine + H2O = 4-amino-2-methyl-5-(phosphooxymethyl)pyrimidine + phosphate + H(+). In terms of biological role, catalyzes the hydrolysis of 4-amino-2-methyl-5-hydroxymethylpyrimidine pyrophosphate (HMP-PP) to 4-amino-2-methyl-5-hydroxymethylpyrimidine phosphate (HMP-P). The chain is HMP-PP phosphatase from Yersinia enterocolitica serotype O:8 / biotype 1B (strain NCTC 13174 / 8081).